Here is a 132-residue protein sequence, read N- to C-terminus: Large ribosomal subunit protein bL12 (132 aa).

This sequence belongs to the bacterial ribosomal protein bL12 family. Homodimer. Part of the ribosomal stalk of the 50S ribosomal subunit. Forms a multimeric L10(L12)X complex, where L10 forms an elongated spine to which 2 to 4 L12 dimers bind in a sequential fashion. Binds GTP-bound translation factors.

Its function is as follows. Forms part of the ribosomal stalk which helps the ribosome interact with GTP-bound translation factors. Is thus essential for accurate translation. This is Large ribosomal subunit protein bL12 from Chloroflexus aurantiacus (strain ATCC 29366 / DSM 635 / J-10-fl).